A 480-amino-acid chain; its full sequence is Glutamate--tRNA ligase (480 aa).

The 'HIGH' region signature appears at 21–31 (PSPTGYLHVGG). 4 residues coordinate Zn(2+): Cys110, Cys112, Cys137, and His139. Residues 248–252 (KLSKR) carry the 'KMSKS' region motif. Lys251 lines the ATP pocket.

It belongs to the class-I aminoacyl-tRNA synthetase family. Glutamate--tRNA ligase type 1 subfamily. In terms of assembly, monomer. It depends on Zn(2+) as a cofactor.

It localises to the cytoplasm. It carries out the reaction tRNA(Glu) + L-glutamate + ATP = L-glutamyl-tRNA(Glu) + AMP + diphosphate. Functionally, catalyzes the attachment of glutamate to tRNA(Glu) in a two-step reaction: glutamate is first activated by ATP to form Glu-AMP and then transferred to the acceptor end of tRNA(Glu). The sequence is that of Glutamate--tRNA ligase from Mannheimia succiniciproducens (strain KCTC 0769BP / MBEL55E).